The primary structure comprises 518 residues: Tyrosine/DOPA decarboxylase 1 (518 aa).

The residue at position 321 (Lys-321) is an N6-(pyridoxal phosphate)lysine.

This sequence belongs to the group II decarboxylase family. In terms of assembly, homodimer. Requires pyridoxal 5'-phosphate as cofactor. In terms of tissue distribution, predominantly expressed in the roots.

The enzyme catalyses L-tyrosine + H(+) = tyramine + CO2. It carries out the reaction L-dopa + H(+) = dopamine + CO2. The catalysed reaction is 5-hydroxy-L-tryptophan + H(+) = serotonin + CO2. Functionally, marginally higher substrate specificity for L-DOPA over L-tyrosine. The chain is Tyrosine/DOPA decarboxylase 1 (TYDC1) from Papaver somniferum (Opium poppy).